A 1430-amino-acid polypeptide reads, in one-letter code: Transport and Golgi organization protein 1 (1430 aa).

Positions 1 to 34 are cleaved as a signal peptide; that stretch reads MRLTNEKATMQPQLSDLALVLGLLICCLPTLTWA. The Extracellular portion of the chain corresponds to 35 to 796; it reads ATLSDKRLCA…ADKLVDHSQL (762 aa). An SH3 domain is found at 50–112; that stretch reads QIISMGIAKI…NKDFIMEKKI (63 aa). 5 disordered regions span residues 253-272, 284-303, 318-362, 445-524, and 568-673; these read QEEP…PPLP, DFDY…SQDN, ESIE…SLPT, SDAE…DQQK, and EEAE…TDNH. Residues 284–296 are compositionally biased toward acidic residues; the sequence is DFDYGDDETDDDS. 3 stretches are compositionally biased toward basic and acidic residues: residues 331–357, 497–524, and 568–588; these read KKTD…KQED, LQEE…DQQK, and EEAE…RSSE. Residues 494–620 are a coiled coil; the sequence is YKQLQEEQEK…QSNEIVDNNN (127 aa). The span at 594-621 shows a compositional bias: polar residues; the sequence is LSVQEANMQQLNDSVDSQSNEIVDNNNR. Residues 640-651 are compositionally biased toward low complexity; it reads HPSTASHTTPTP. The helical transmembrane segment at 797–817 threads the bilayer; the sequence is LLCVVIAAISSLFFMFAYYCF. Over 818 to 1430 the chain is Cytoplasmic; sequence CNSSQEGALL…SATSRPYSEV (613 aa). Phosphoserine is present on residues Ser865 and Ser868. The stretch at 869–1245 forms a coiled coil; it reads NDMVADLKKQ…SLRRKLTTMA (377 aa). Residues 1105–1114 show a composition bias toward low complexity; it reads SQLQQSSQDV. Disordered regions lie at residues 1105-1126 and 1312-1430; these read SQLQ…QSER and LPPT…YSEV. Residues 1115–1126 are compositionally biased toward basic and acidic residues; the sequence is EQLKQDFNQSER. The span at 1321-1334 shows a compositional bias: pro residues; the sequence is RPPPLGRMRSPPPS. Residues 1336–1346 are compositionally biased toward basic and acidic residues; sequence RGDRDRERYSD. Phosphoserine occurs at positions 1345 and 1348. The span at 1348 to 1361 shows a compositional bias: acidic residues; sequence SDYDDYDDDEEDDR. Positions 1364 to 1380 are enriched in basic residues; it reads DRRRRHSGSWGRRHRGS. Polar residues predominate over residues 1387-1402; that stretch reads TYRSLSPSDSRYNYND. Residues Ser1390 and Ser1392 each carry the phosphoserine modification. Over residues 1408–1417 the composition is skewed to pro residues; it reads SPPPSPPPVP. The segment covering 1420–1430 has biased composition (polar residues); it reads RSATSRPYSEV.

It belongs to the MIA/OTOR family. Tango1 subfamily.

Its subcellular location is the golgi apparatus membrane. It is found in the golgi apparatus. The protein resides in the trans-Golgi network. Functionally, required for protein secretion. May participate in cargo loading by binding to COPII coat subunits and guiding SH3-bound proteins into a growing carrier. At basal transitional ER sites in follicle epithelial cells, mediates the exit of basal membrane protein such as vkg, LanB1 and Trol, from the endoplasmic reticulum (ER) to basal Golgi clusters. This is Transport and Golgi organization protein 1 from Drosophila melanogaster (Fruit fly).